The primary structure comprises 234 residues: Small ribosomal subunit protein uS3 (234 aa).

One can recognise a KH type-2 domain in the interval isoleucine 39–lysine 107.

It belongs to the universal ribosomal protein uS3 family. In terms of assembly, part of the 30S ribosomal subunit. Forms a tight complex with proteins S10 and S14.

Its function is as follows. Binds the lower part of the 30S subunit head. Binds mRNA in the 70S ribosome, positioning it for translation. This Helicobacter pylori (strain G27) protein is Small ribosomal subunit protein uS3.